The primary structure comprises 231 residues: MWNDMKLAIAFLSRVPVPLKQNKGNLKKICAYFTFVGYLAGVFYFSMKLISENFLWTLLSVALGFYLFDLFHFDGLLDTLDGFFYQGTKERRFEIMSKGDIGPFAFFYAALYIVAYLYAFLHVDPIDLIYVAVLGRFSMNILLHFGKPAKNTGLGKLLHPYEKKHTLISLVFTIPLVYFPLNYIISLSIALLLGSSMHFITNRKIEGYTGDVLGATCMFSQLSIMVALSLI.

The next 6 helical transmembrane spans lie at 29-49 (ICAYFTFVGYLAGVFYFSMKL), 53-73 (NFLWTLLSVALGFYLFDLFHF), 101-121 (IGPFAFFYAALYIVAYLYAFL), 126-146 (IDLIYVAVLGRFSMNILLHFG), 167-187 (LISLVFTIPLVYFPLNYIISL), and 211-231 (DVLGATCMFSQLSIMVALSLI).

The protein belongs to the CobS family. Mg(2+) is required as a cofactor.

The protein resides in the cell inner membrane. The catalysed reaction is alpha-ribazole + adenosylcob(III)inamide-GDP = adenosylcob(III)alamin + GMP + H(+). It catalyses the reaction alpha-ribazole 5'-phosphate + adenosylcob(III)inamide-GDP = adenosylcob(III)alamin 5'-phosphate + GMP + H(+). The protein operates within cofactor biosynthesis; adenosylcobalamin biosynthesis; adenosylcobalamin from cob(II)yrinate a,c-diamide: step 7/7. Functionally, joins adenosylcobinamide-GDP and alpha-ribazole to generate adenosylcobalamin (Ado-cobalamin). Also synthesizes adenosylcobalamin 5'-phosphate from adenosylcobinamide-GDP and alpha-ribazole 5'-phosphate. The protein is Adenosylcobinamide-GDP ribazoletransferase of Kosmotoga olearia (strain ATCC BAA-1733 / DSM 21960 / TBF 19.5.1).